We begin with the raw amino-acid sequence, 137 residues long: Small ribosomal subunit protein uS12 (137 aa).

Residues 1 to 57 (MPTINQLVRKPRKSKVEKSKSPALNVGYNSHKKVQTNVSSPQKRGVATRVGTMTPKK) form a disordered region. A 3-methylthioaspartic acid modification is found at Asp102.

The protein belongs to the universal ribosomal protein uS12 family. In terms of assembly, part of the 30S ribosomal subunit. Contacts proteins S8 and S17. May interact with IF1 in the 30S initiation complex.

In terms of biological role, with S4 and S5 plays an important role in translational accuracy. Functionally, interacts with and stabilizes bases of the 16S rRNA that are involved in tRNA selection in the A site and with the mRNA backbone. Located at the interface of the 30S and 50S subunits, it traverses the body of the 30S subunit contacting proteins on the other side and probably holding the rRNA structure together. The combined cluster of proteins S8, S12 and S17 appears to hold together the shoulder and platform of the 30S subunit. The chain is Small ribosomal subunit protein uS12 from Streptococcus sanguinis (strain SK36).